Reading from the N-terminus, the 1090-residue chain is ATP-dependent helicase/deoxyribonuclease subunit B (1090 aa).

7-14 (GPVGSGKS) is a binding site for ATP. [4Fe-4S] cluster-binding residues include C719, C1035, C1038, and C1044.

This sequence belongs to the helicase family. AddB/RexB type 1 subfamily. As to quaternary structure, heterodimer of AddA and AddB. Requires Mg(2+) as cofactor. It depends on [4Fe-4S] cluster as a cofactor.

In terms of biological role, the heterodimer acts as both an ATP-dependent DNA helicase and an ATP-dependent, dual-direction single-stranded exonuclease. Recognizes the chi site generating a DNA molecule suitable for the initiation of homologous recombination. The AddB subunit has 5' -&gt; 3' nuclease activity but not helicase activity. In Carboxydothermus hydrogenoformans (strain ATCC BAA-161 / DSM 6008 / Z-2901), this protein is ATP-dependent helicase/deoxyribonuclease subunit B.